The sequence spans 438 residues: POU domain, class 3, transcription factor 3-A (438 aa).

Disordered regions lie at residues Val-22–Gly-43, Ser-102–Gln-172, and Gly-186–Asp-248. 2 stretches are compositionally biased toward polar residues: residues Pro-103–Ser-123 and Gln-146–His-159. The span at Ile-160 to Gln-172 shows a compositional bias: low complexity. Positions His-210–His-230 are enriched in basic residues. In terms of domain architecture, POU-specific spans Glu-242 to Asp-316. Residues Lys-334 to Thr-393 constitute a DNA-binding region (homeobox).

This sequence belongs to the POU transcription factor family. Class-3 subfamily. Predominantly expressed in the embryonic and adult central nervous system. In adults, isoform 2 is expressed in the brain, ovary, basal cells of the skin and muscle satellite cells.

It is found in the nucleus. Its function is as follows. Transcription factor that may play important roles in patterning the embryonic brain. This Danio rerio (Zebrafish) protein is POU domain, class 3, transcription factor 3-A (pou3f3a).